Consider the following 223-residue polypeptide: Serine/threonine/tyrosine-interacting protein (223 aa).

Residues 28–176 form the Tyrosine-protein phosphatase domain; that stretch reads EMQEILPGLF…LQEYEAIYLA (149 aa). Residues 76–78 carry the Interaction with FBXW7 motif; that stretch reads FQQ. Phosphoserine occurs at positions 184, 193, and 201. Positions 197 to 223 are disordered; it reads GTTGSLKRTHEEEDDFGTMQVATAQNG.

Belongs to the protein-tyrosine phosphatase family. Non-receptor class subfamily. As to quaternary structure, interacts with MAPK1; independently of MAPK1 phosphorylation status. Interacts with CARHSP1/Crhsp-24. Interacts (via FQQ motif) with FBXW7 isoforms 1 (via F-box domain) and 3 (via F-box domain); the interaction is direct and prevents FBXW7 interaction with SKP1, a component of the SCF(FBXW7) complex. Does not interact with FBXW7 isoform 2.

It localises to the nucleus. The protein resides in the cytoplasm. It is found in the cytosol. Catalytically inactive phosphatase. Acts as a nuclear anchor for MAPK1/MAPK3 (ERK1/ERK2). Modulates cell-fate decisions and cell migration by spatiotemporal regulation of MAPK1/MAPK3 (ERK1/ERK2). By binding to the F-box of FBXW7, prevents the assembly of FBXW7 into the SCF E3 ubiquitin-protein ligase complex, and thereby inhibits degradation of its substrates. Plays a role in spermatogenesis. This Homo sapiens (Human) protein is Serine/threonine/tyrosine-interacting protein.